The following is a 622-amino-acid chain: tRNA uridine 5-carboxymethylaminomethyl modification enzyme MnmG (622 aa).

10–15 (GGGHAG) contributes to the FAD binding site. Residue 269 to 283 (GPRYCPSVEDKIVKF) coordinates NAD(+).

This sequence belongs to the MnmG family. In terms of assembly, homodimer. Heterotetramer of two MnmE and two MnmG subunits. The cofactor is FAD.

Its subcellular location is the cytoplasm. Functionally, NAD-binding protein involved in the addition of a carboxymethylaminomethyl (cmnm) group at the wobble position (U34) of certain tRNAs, forming tRNA-cmnm(5)s(2)U34. This Bartonella quintana (strain Toulouse) (Rochalimaea quintana) protein is tRNA uridine 5-carboxymethylaminomethyl modification enzyme MnmG.